Consider the following 476-residue polypeptide: Proline--tRNA ligase (476 aa).

It belongs to the class-II aminoacyl-tRNA synthetase family. ProS type 3 subfamily. Homodimer.

It localises to the cytoplasm. It catalyses the reaction tRNA(Pro) + L-proline + ATP = L-prolyl-tRNA(Pro) + AMP + diphosphate. Its function is as follows. Catalyzes the attachment of proline to tRNA(Pro) in a two-step reaction: proline is first activated by ATP to form Pro-AMP and then transferred to the acceptor end of tRNA(Pro). This is Proline--tRNA ligase from Mycoplasmopsis pulmonis (strain UAB CTIP) (Mycoplasma pulmonis).